The chain runs to 132 residues: Large ribosomal subunit protein bL19 (132 aa).

Belongs to the bacterial ribosomal protein bL19 family.

Its function is as follows. This protein is located at the 30S-50S ribosomal subunit interface and may play a role in the structure and function of the aminoacyl-tRNA binding site. The protein is Large ribosomal subunit protein bL19 of Persephonella marina (strain DSM 14350 / EX-H1).